The following is a 259-amino-acid chain: Flagellar brake protein YcgR (259 aa).

The PilZ domain occupies 129 to 246; sequence QRREFYRLQT…DNAIQRYIFK (118 aa).

This sequence belongs to the YcgR family. Monomer. Interacts with the flagellar basal bodies.

It is found in the bacterial flagellum basal body. Functionally, acts as a flagellar brake, regulating swimming and swarming in a bis-(3'-5') cyclic diguanylic acid (c-di-GMP)-dependent manner. Binds 1 c-di-GMP dimer per subunit. Increasing levels of c-di-GMP lead to decreased motility. The protein is Flagellar brake protein YcgR of Azoarcus sp. (strain BH72).